A 126-amino-acid chain; its full sequence is Apolipoprotein C-IV (126 aa).

The signal sequence occupies residues 1-27 (MSLLRHRLQALPSLCLCVLVLACIGAC).

Belongs to the apolipoprotein C4 family.

The protein localises to the secreted. Its function is as follows. May participate in lipoprotein metabolism. This chain is Apolipoprotein C-IV (APOC4), found in Aotus nancymaae (Ma's night monkey).